We begin with the raw amino-acid sequence, 287 residues long: Lipoyl synthase (287 aa).

Residues Cys-34, Cys-39, Cys-45, Cys-60, Cys-64, Cys-67, and Ser-273 each contribute to the [4Fe-4S] cluster site. The Radical SAM core domain maps to Trp-46–Leu-262.

Belongs to the radical SAM superfamily. Lipoyl synthase family. [4Fe-4S] cluster is required as a cofactor.

It localises to the cytoplasm. The catalysed reaction is [[Fe-S] cluster scaffold protein carrying a second [4Fe-4S](2+) cluster] + N(6)-octanoyl-L-lysyl-[protein] + 2 oxidized [2Fe-2S]-[ferredoxin] + 2 S-adenosyl-L-methionine + 4 H(+) = [[Fe-S] cluster scaffold protein] + N(6)-[(R)-dihydrolipoyl]-L-lysyl-[protein] + 4 Fe(3+) + 2 hydrogen sulfide + 2 5'-deoxyadenosine + 2 L-methionine + 2 reduced [2Fe-2S]-[ferredoxin]. Its pathway is protein modification; protein lipoylation via endogenous pathway; protein N(6)-(lipoyl)lysine from octanoyl-[acyl-carrier-protein]: step 2/2. In terms of biological role, catalyzes the radical-mediated insertion of two sulfur atoms into the C-6 and C-8 positions of the octanoyl moiety bound to the lipoyl domains of lipoate-dependent enzymes, thereby converting the octanoylated domains into lipoylated derivatives. The chain is Lipoyl synthase from Wolbachia sp. subsp. Drosophila simulans (strain wRi).